The primary structure comprises 630 residues: Chaperone protein HtpG (630 aa).

An a; substrate-binding region spans residues 1 to 341 (MTQNATSETL…SADLPLNVSR (341 aa)). Residues 342–558 (EILQESRDVR…QNDLSPHLLR (217 aa)) are b. The interval 559–630 (MLKAAGQEVP…KRLNALLLKV (72 aa)) is c.

Belongs to the heat shock protein 90 family. In terms of assembly, homodimer.

Its subcellular location is the cytoplasm. Its function is as follows. Molecular chaperone. Has ATPase activity. The polypeptide is Chaperone protein HtpG (Bordetella avium (strain 197N)).